The following is a 392-amino-acid chain: MQLRKLLLPGLLSVTLLSGCSLFNSEEDVVKMSPLPTVENQFTPTTAWSTSVGSGIGNFYSNLHPALADNVVYAADRAGLVKALNADDGKEIWSVSLAEKDGWFSKEPALLSGGVTVSGGHVYIGSEKAQVYALNTSDGTVAWQTKVAGEALSRPVVSDGLVLIHTSNGQLQALNEADGAVKWTVNLDMPSLSLRGESAPATAFGAAVVGGDNGRVSAVLMEQGQMIWQQRISQATGSTEIDRLSDVDTTPVVVNGVVFALAYNGNLTALDLRSGQIMWKRELGSVNDFIVDGNRIYLVDQNDRVMALTIDGGVTLWTQSDLLHRLLTSPVLYNGNLVVGDSEGYLHWINVEDGRFVAQQKVDSSGFQTEPVAADGKLLIQAKDGTVYSITR.

The signal sequence occupies residues 1–19; the sequence is MQLRKLLLPGLLSVTLLSG. The N-palmitoyl cysteine moiety is linked to residue cysteine 20. A lipid anchor (S-diacylglycerol cysteine) is attached at cysteine 20.

This sequence belongs to the BamB family. As to quaternary structure, part of the Bam complex, which is composed of the outer membrane protein BamA, and four lipoproteins BamB, BamC, BamD and BamE.

Its subcellular location is the cell outer membrane. Functionally, part of the outer membrane protein assembly complex, which is involved in assembly and insertion of beta-barrel proteins into the outer membrane. This is Outer membrane protein assembly factor BamB from Shigella dysenteriae serotype 1 (strain Sd197).